A 41-amino-acid polypeptide reads, in one-letter code: FDGRNTSANNKATDLMALPVRGCCSDPPCRNKHPDLCGGRR.

Positions 1-20 (FDGRNTSANNKATDLMALPV) are excised as a propeptide. Cystine bridges form between Cys-23-Cys-29 and Cys-24-Cys-37. A ser-Xaa-Pro motif, crucial for potent interaction with nAChR region spans residues 25–27 (SDP). Cys-37 bears the Cysteine amide; in Alpha-conotoxin TxIB mark. Positions 39-41 (GRR) are excised as a propeptide.

Belongs to the conotoxin A superfamily. As to expression, expressed by the venom duct.

The protein localises to the secreted. Its function is as follows. Alpha-conotoxins act on postsynaptic membranes, they bind to the nicotinic acetylcholine receptors (nAChR) and thus inhibit them. This conotoxin is a subtype-specific blocker of alpha-6/alpha-3-beta-2-beta-3 (CHRNA6/CHRNA3-CHRNB2-CHRNB3) nAChRs nicotinic acetylcholine receptors (nAChRs) (IC(50)=28.4 nM). The protein is Alpha-conotoxin TxIB of Conus textile (Cloth-of-gold cone).